The following is a 248-amino-acid chain: tRNA (guanine-N(1)-)-methyltransferase (248 aa).

Residues glycine 117 and 137 to 142 (IGDFVL) contribute to the S-adenosyl-L-methionine site.

This sequence belongs to the RNA methyltransferase TrmD family. As to quaternary structure, homodimer.

It localises to the cytoplasm. It carries out the reaction guanosine(37) in tRNA + S-adenosyl-L-methionine = N(1)-methylguanosine(37) in tRNA + S-adenosyl-L-homocysteine + H(+). In terms of biological role, specifically methylates guanosine-37 in various tRNAs. In Polynucleobacter asymbioticus (strain DSM 18221 / CIP 109841 / QLW-P1DMWA-1) (Polynucleobacter necessarius subsp. asymbioticus), this protein is tRNA (guanine-N(1)-)-methyltransferase.